Reading from the N-terminus, the 78-residue chain is Major outer membrane lipoprotein Lpp (78 aa).

The N-terminal stretch at 1–19 (MKAKIVLGAVILASGLLAG) is a signal peptide. Residue cysteine 20 is the site of N-palmitoyl cysteine attachment. Cysteine 20 carries S-diacylglycerol cysteine lipidation. Repeats lie at residues 25-35 (NAQLDQISSDV) and 39-49 (NTQVQQLSSDV). A coiled-coil region spans residues 28 to 62 (LDQISSDVNRLNTQVQQLSSDVQSANAQAKAAYEA). Lysine 78 bears the N6-murein peptidoglycan lysine mark.

This sequence belongs to the Lpp family. Homotrimer.

It localises to the cell outer membrane. The protein resides in the secreted. It is found in the cell wall. A highly abundant outer membrane lipoprotein that controls the distance between the inner and outer membranes. The only protein known to be covalently linked to the peptidoglycan network (PGN). Also non-covalently binds the PGN. The link between the cell outer membrane and PGN contributes to maintenance of the structural and functional integrity of the cell envelope, and maintains the correct distance between the PGN and the outer membrane. This is Major outer membrane lipoprotein Lpp from Proteus mirabilis.